A 163-amino-acid polypeptide reads, in one-letter code: MLKRSLLFLTVLLLLFSFSSITNEVSASSSFDKGKYKKGDDASYFEPTGPYLMVNVTGVDGKRNELLSPRYVEFPIKPGTTLTKEKIEYYVEWALDATAYKEFRVVELDPSAKIEVTYYDKNKKKEETKSFPITEKGFVVPDLSEHIKNPGFNLITKVVIEKK.

The signal sequence occupies residues 1-27 (MLKRSLLFLTVLLLLFSFSSITNEVSA).

This sequence belongs to the staphylokinase family.

Its subcellular location is the secreted. In terms of biological role, potent plasminogen activator that converts plasminogen into plasmin. It forms a 1:1 complex with plasmin, which in turn activates other plasminogen molecules. The protein is Staphylokinase (sak) of Staphylococcus aureus (Bacteriophage P42D).